The chain runs to 271 residues: Formamidopyrimidine-DNA glycosylase (271 aa).

The Schiff-base intermediate with DNA role is filled by proline 2. The active-site Proton donor is the glutamate 3. Residue lysine 57 is the Proton donor; for beta-elimination activity of the active site. DNA contacts are provided by histidine 90, arginine 109, and lysine 150. An FPG-type zinc finger spans residues 235–269; the sequence is LVYGNKDKPCPKCGGKIESLIIGQRNSFFCPKCQK. The Proton donor; for delta-elimination activity role is filled by arginine 259.

This sequence belongs to the FPG family. In terms of assembly, monomer. It depends on Zn(2+) as a cofactor.

It carries out the reaction Hydrolysis of DNA containing ring-opened 7-methylguanine residues, releasing 2,6-diamino-4-hydroxy-5-(N-methyl)formamidopyrimidine.. It catalyses the reaction 2'-deoxyribonucleotide-(2'-deoxyribose 5'-phosphate)-2'-deoxyribonucleotide-DNA = a 3'-end 2'-deoxyribonucleotide-(2,3-dehydro-2,3-deoxyribose 5'-phosphate)-DNA + a 5'-end 5'-phospho-2'-deoxyribonucleoside-DNA + H(+). Its function is as follows. Involved in base excision repair of DNA damaged by oxidation or by mutagenic agents. Acts as a DNA glycosylase that recognizes and removes damaged bases. Has a preference for oxidized purines, such as 7,8-dihydro-8-oxoguanine (8-oxoG). Has AP (apurinic/apyrimidinic) lyase activity and introduces nicks in the DNA strand. Cleaves the DNA backbone by beta-delta elimination to generate a single-strand break at the site of the removed base with both 3'- and 5'-phosphates. The polypeptide is Formamidopyrimidine-DNA glycosylase (Haemophilus influenzae (strain PittEE)).